Consider the following 573-residue polypeptide: Protein FAM227B (573 aa).

The stretch at 429-485 (DNKKDFKRVKQRIKDDIKFLKEQQEQIDKELDRLQAKASKNLQEVKNDFENFLHKLR) forms a coiled coil. The span at 497–521 (SASPSESLQSLQSPNSSLSSPAMSE) shows a compositional bias: low complexity. The interval 497-528 (SASPSESLQSLQSPNSSLSSPAMSEDFNSVEE) is disordered.

The protein belongs to the FAM227 family.

The protein is Protein FAM227B (Fam227b) of Rattus norvegicus (Rat).